Reading from the N-terminus, the 129-residue chain is Urease subunit beta (129 aa).

Belongs to the urease beta subunit family. As to quaternary structure, heterotrimer of UreA (gamma), UreB (beta) and UreC (alpha) subunits. Three heterotrimers associate to form the active enzyme.

The protein localises to the cytoplasm. It catalyses the reaction urea + 2 H2O + H(+) = hydrogencarbonate + 2 NH4(+). Its pathway is nitrogen metabolism; urea degradation; CO(2) and NH(3) from urea (urease route): step 1/1. The chain is Urease subunit beta from Photorhabdus laumondii subsp. laumondii (strain DSM 15139 / CIP 105565 / TT01) (Photorhabdus luminescens subsp. laumondii).